Here is a 482-residue protein sequence, read N- to C-terminus: Bifunctional protein GlmU (482 aa).

The interval 1-241 is pyrophosphorylase; sequence MTASTEAAVV…SALVTGVNDR (241 aa). Residues 12–15, Lys26, Gln83, 88–89, 112–114, Gly151, Glu166, Asn181, and Asn239 each bind UDP-N-acetyl-alpha-D-glucosamine; these read LAAG, GT, and SGD. Residue Asp114 coordinates Mg(2+). Asn239 contributes to the Mg(2+) binding site. A linker region spans residues 242–262; it reads VQLSDLGKVLNRRIVAAHQRA. The tract at residues 263-482 is N-acetyltransferase; sequence GVTIIDPGST…AARKALGDES (220 aa). 2 residues coordinate UDP-N-acetyl-alpha-D-glucosamine: Arg344 and Lys362. The active-site Proton acceptor is His374. Residues Tyr377 and Asn388 each contribute to the UDP-N-acetyl-alpha-D-glucosamine site. Acetyl-CoA-binding positions include Ala391, 397-398, Ser416, and Ala434; that span reads NY. The segment at 463–482 is disordered; sequence KKRPGSAADKAARKALGDES. Basic and acidic residues predominate over residues 472 to 482; sequence KAARKALGDES.

The protein in the N-terminal section; belongs to the N-acetylglucosamine-1-phosphate uridyltransferase family. This sequence in the C-terminal section; belongs to the transferase hexapeptide repeat family. Homotrimer. Mg(2+) serves as cofactor.

It localises to the cytoplasm. The enzyme catalyses alpha-D-glucosamine 1-phosphate + acetyl-CoA = N-acetyl-alpha-D-glucosamine 1-phosphate + CoA + H(+). The catalysed reaction is N-acetyl-alpha-D-glucosamine 1-phosphate + UTP + H(+) = UDP-N-acetyl-alpha-D-glucosamine + diphosphate. The protein operates within nucleotide-sugar biosynthesis; UDP-N-acetyl-alpha-D-glucosamine biosynthesis; N-acetyl-alpha-D-glucosamine 1-phosphate from alpha-D-glucosamine 6-phosphate (route II): step 2/2. Its pathway is nucleotide-sugar biosynthesis; UDP-N-acetyl-alpha-D-glucosamine biosynthesis; UDP-N-acetyl-alpha-D-glucosamine from N-acetyl-alpha-D-glucosamine 1-phosphate: step 1/1. It participates in bacterial outer membrane biogenesis; LPS lipid A biosynthesis. In terms of biological role, catalyzes the last two sequential reactions in the de novo biosynthetic pathway for UDP-N-acetylglucosamine (UDP-GlcNAc). The C-terminal domain catalyzes the transfer of acetyl group from acetyl coenzyme A to glucosamine-1-phosphate (GlcN-1-P) to produce N-acetylglucosamine-1-phosphate (GlcNAc-1-P), which is converted into UDP-GlcNAc by the transfer of uridine 5-monophosphate (from uridine 5-triphosphate), a reaction catalyzed by the N-terminal domain. This chain is Bifunctional protein GlmU, found in Mycolicibacterium smegmatis (strain ATCC 700084 / mc(2)155) (Mycobacterium smegmatis).